The following is an 813-amino-acid chain: Leucine--tRNA ligase (813 aa).

The 'HIGH' region motif lies at 41 to 51 (PYPSGTLHMGH). The 'KMSKS' region signature appears at 575–579 (KMSKS). Lys-578 provides a ligand contact to ATP.

It belongs to the class-I aminoacyl-tRNA synthetase family.

It localises to the cytoplasm. It catalyses the reaction tRNA(Leu) + L-leucine + ATP = L-leucyl-tRNA(Leu) + AMP + diphosphate. In Francisella philomiragia subsp. philomiragia (strain ATCC 25017 / CCUG 19701 / FSC 153 / O#319-036), this protein is Leucine--tRNA ligase.